The primary structure comprises 502 residues: MSIRAEEISALLKARIAQYGSTMEVNETGTVIQIGDGIARAHGLDNVMSGELVEFANGTMGLAQNLEEGNVGIIILGDYLEIKEGDSVRRTGRIMEVPTGDALLGRVVNPLGMPIDGLGPIETEHYNPIERKASGVMARKSVHEPLQTGIKAIDALVPIGRGQRELIIGDRQTGKTSIAIDTIINQKEENMICIYVAIGQKESTVRGVVETLRKNGALDYTIVVSAAASQPAPLLYLAPFAGVAMGEHFMDLGKHVLVIYDDLSKQAAAYRELSLLLKRPPGREAYPGDVFYLHSRLLERAAKLNDGLGAGSLTALPFIETQASDISAYIPTNVISITDGQIFLQSDLFFSGVRPAINPGLSVSRVGGSAQVKAMKKVAGTLRLDLASYRELEAFSQFGSDLDKATQSKLNRGERTVEVLKQDLNQPLTVDKQVIIIYALTRGHLDDVAVSDIRRFEKELNLWLDQNRKQLCDEIRKTGNLPADEEIVTAISEFKKTFQPTV.

Residue 169-176 (GDRQTGKT) participates in ATP binding.

The protein belongs to the ATPase alpha/beta chains family. In terms of assembly, F-type ATPases have 2 components, CF(1) - the catalytic core - and CF(0) - the membrane proton channel. CF(1) has five subunits: alpha(3), beta(3), gamma(1), delta(1), epsilon(1). CF(0) has three main subunits: a(1), b(2) and c(9-12). The alpha and beta chains form an alternating ring which encloses part of the gamma chain. CF(1) is attached to CF(0) by a central stalk formed by the gamma and epsilon chains, while a peripheral stalk is formed by the delta and b chains.

It localises to the cell membrane. It catalyses the reaction ATP + H2O + 4 H(+)(in) = ADP + phosphate + 5 H(+)(out). In terms of biological role, produces ATP from ADP in the presence of a proton gradient across the membrane. The alpha chain is a regulatory subunit. This chain is ATP synthase subunit alpha, found in Exiguobacterium sibiricum (strain DSM 17290 / CCUG 55495 / CIP 109462 / JCM 13490 / 255-15).